The following is a 420-amino-acid chain: Threonine aspartase 1 (420 aa).

Positions 1–25 (MIMEKGMNSGEGLPSRSSQASAAKV) are disordered. Catalysis depends on Thr234, which acts as the Nucleophile.

This sequence belongs to the Ntn-hydrolase family. Intramolecular proteolysis generates 2 subunits, alpha and beta, which reassemble through a non-covalent association to form the fully active enzyme.

Protease responsible for KMT2A/MLL1 and KMT2D/MLL2 processing and activation. Through substrate activation, it controls the expression of HOXA genes, and the expression of key cell cycle regulators including CCNA1, CCNB1, CCNE1 and CDKN2A. The sequence is that of Threonine aspartase 1 (Tasp1) from Mus musculus (Mouse).